The following is a 70-amino-acid chain: MEQLAQRVEDLEMKLAFQESTIDVLDQQVIKLNDLLAEQQHQLRVLISKLQSVEPSNMATQAEETPPPHY.

The protein belongs to the SlyX family.

The chain is Protein SlyX homolog from Shewanella woodyi (strain ATCC 51908 / MS32).